Consider the following 562-residue polypeptide: Protein wntless (562 aa).

Residues 1–13 (MSGTILENLSGRK) lie on the Cytoplasmic side of the membrane. The chain crosses the membrane as a helical span at residues 14–34 (LSILVSSLMLCQVACFLMGGL). Residues 35 to 239 (YAPVPAGHQT…AIHQNGGFTQ (205 aa)) are Lumenal-facing. N-linked (GlcNAc...) asparagine glycans are attached at residues asparagine 58 and asparagine 103. Residues 240-260 (VWLLLKTLLFPFVVGIMIWFW) traverse the membrane as a helical segment. Topologically, residues 261-270 (RRVHILQRSP) are cytoplasmic. Residues 271-291 (ALLEYMLLYLGGALSFLNLPL) traverse the membrane as a helical segment. The Lumenal portion of the chain corresponds to 292–311 (EYLTLSIEMPYMLLLSDVRQ). A helical membrane pass occupies residues 312 to 332 (GIFYAMLLSFWLVFAGEHMLI). Residues 333–344 (QDTPNKSTIRSR) lie on the Cytoplasmic side of the membrane. The helical transmembrane segment at 345 to 365 (YWKHLSAVVVGCISLFVFDIC) threads the bilayer. The Lumenal portion of the chain corresponds to 366–390 (ERGVQLRNPFYSIWTTPLGAKVAMS). A helical membrane pass occupies residues 391–411 (FIVLAGVSAAIYFLFLCFMVW). At 412–441 (KVFKDIGDKRTSLPSMSQARRLHYEGLIYR) the chain is on the cytoplasmic side. A helical membrane pass occupies residues 442-462 (FKFLMLATLLCAGLTVAGFIM). Over 463–482 (GQMAEGHWKWNEDIEIQLTS) the chain is Lumenal. A helical transmembrane segment spans residues 483–503 (AFLTGVYGMWNIYIFALIILY). The Cytoplasmic segment spans residues 504-562 (APSHKQWPTMRHSDETTQSNENIVASAASEEIEFSNLPSDSNPSEISSLTSFTRKVAFD).

Belongs to the wntless family. Interacts with wg; in the Golgi. Interacts with Vps35, a component of the retromer complex; wls stability is regulated by Vps35.

The protein localises to the presynaptic cell membrane. Its subcellular location is the postsynaptic cell membrane. It localises to the cell membrane. The protein resides in the endoplasmic reticulum membrane. It is found in the endosome membrane. The protein localises to the golgi apparatus membrane. Functionally, a segment polarity gene required for wingless (wg)-dependent patterning processes, acting in both wg-sending cells and wg-target cells. In non-neuronal cells wls directs wg secretion. The wls traffic loop encompasses the Golgi, the cell surface, an endocytic compartment and a retrograde route leading back to the Golgi, and involves clathrin-mediated endocytosis and the retromer complex (a conserved protein complex consisting of Vps35 and Vps26). In neuronal cells (the larval motorneuron NMJ), the wg signal moves across the synapse via the release of wls-containing exosome-like vesicles. Postsynaptic wls is required for the trafficking of fz2 through the fz2-interacting protein Grip. The sequence is that of Protein wntless from Drosophila virilis (Fruit fly).